Consider the following 695-residue polypeptide: NADPH--cytochrome P450 reductase (695 aa).

Topologically, residues 1–8 (MAQLDTLD) are lumenal. A helical transmembrane segment spans residues 9 to 31 (LVVLAVLLVGSVAYFTKGTYWAV). Residues 32–695 (AKDPYASTGP…SGSYQEDVWS (664 aa)) lie on the Cytoplasmic side of the membrane. Positions 66-221 (CVIFYGSQTG…DFLAWKEPMW (156 aa)) constitute a Flavodoxin-like domain. Residues 72–77 (SQTGTA), 123–126 (ATYG), 169–178 (LGNNTYEHYN), and D204 contribute to the FMN site. Residues 277–538 (HNPFIAPIAE…HVRHSNFKLP (262 aa)) form the FAD-binding FR-type domain. R296 contributes to the NADP(+) binding site. FAD-binding positions include 451-454 (RYYS), 469-471 (TAV), and 486-489 (GVTT). NADP(+) is bound by residues T552, 614–615 (SR), 620–624 (KVYVQ), and E656. Residue W694 participates in FAD binding.

The protein belongs to the NADPH--cytochrome P450 reductase family. In the N-terminal section; belongs to the flavodoxin family. It in the C-terminal section; belongs to the flavoprotein pyridine nucleotide cytochrome reductase family. It depends on FAD as a cofactor. The cofactor is FMN.

It localises to the endoplasmic reticulum membrane. It is found in the mitochondrion outer membrane. The protein localises to the cell membrane. It catalyses the reaction 2 oxidized [cytochrome P450] + NADPH = 2 reduced [cytochrome P450] + NADP(+) + H(+). Functionally, this enzyme is required for electron transfer from NADP to cytochrome P450 in microsomes. It can also provide electron transfer to heme oxygenase and cytochrome B5. Involved in ergosterol biosynthesis. The chain is NADPH--cytochrome P450 reductase from Aspergillus niger (strain ATCC MYA-4892 / CBS 513.88 / FGSC A1513).